Here is a 351-residue protein sequence, read N- to C-terminus: Protein Wnt-8a (351 aa).

The N-terminal stretch at 1-24 (MGNLFMLWAALGICCAAFSASAWS) is a signal peptide. Residues cysteine 54 and cysteine 65 are joined by a disulfide bond. N-linked (GlcNAc...) asparagine glycosylation occurs at asparagine 103. Cystine bridges form between cysteine 104-cysteine 112, cysteine 114-cysteine 132, cysteine 180-cysteine 194, cysteine 182-cysteine 189, cysteine 259-cysteine 297, cysteine 275-cysteine 290, cysteine 294-cysteine 336, cysteine 312-cysteine 327, cysteine 314-cysteine 324, and cysteine 319-cysteine 320. Residue serine 186 is the site of O-palmitoleoyl serine attachment. Residues asparagine 262 and asparagine 281 are each glycosylated (N-linked (GlcNAc...) asparagine).

Belongs to the Wnt family. As to quaternary structure, forms a soluble 1:1 complex with AFM; this prevents oligomerization and is required for prolonged biological activity. The complex with AFM may represent the physiological form in body fluids. Palmitoleoylation is required for efficient binding to frizzled receptors. Depalmitoleoylation leads to Wnt signaling pathway inhibition. In terms of processing, proteolytic processing by TIKI1 and TIKI2 promotes oxidation and formation of large disulfide-bond oligomers, leading to inactivation of WNT8A.

It localises to the secreted. The protein resides in the extracellular space. The protein localises to the extracellular matrix. In terms of biological role, ligand for members of the frizzled family of seven transmembrane receptors. Plays a role in embryonic patterning. The protein is Protein Wnt-8a (WNT8A) of Homo sapiens (Human).